The sequence spans 290 residues: Nucleoid occlusion protein (290 aa).

The segment at residues 153-172 (EALAQRLGKGQSTIANKLRL) is a DNA-binding region (H-T-H motif).

The protein belongs to the ParB family.

The protein localises to the cytoplasm. The protein resides in the nucleoid. In terms of biological role, effects nucleoid occlusion by binding relatively nonspecifically to DNA and preventing the assembly of the division machinery in the vicinity of the nucleoid, especially under conditions that disturb the cell cycle. It helps to coordinate cell division and chromosome segregation by preventing the formation of the Z ring through the nucleoid, which would cause chromosome breakage. The chain is Nucleoid occlusion protein from Bacillus cereus (strain AH187).